Here is a 426-residue protein sequence, read N- to C-terminus: Serine hydroxymethyltransferase 1 (426 aa).

(6S)-5,6,7,8-tetrahydrofolate is bound by residues L121 and 125-127; that span reads GHL. Position 230 is an N6-(pyridoxal phosphate)lysine (K230). A (6S)-5,6,7,8-tetrahydrofolate-binding site is contributed by 355-357; that stretch reads SPF.

Belongs to the SHMT family. As to quaternary structure, homodimer. Requires pyridoxal 5'-phosphate as cofactor.

It localises to the cytoplasm. It carries out the reaction (6R)-5,10-methylene-5,6,7,8-tetrahydrofolate + glycine + H2O = (6S)-5,6,7,8-tetrahydrofolate + L-serine. It participates in one-carbon metabolism; tetrahydrofolate interconversion. It functions in the pathway amino-acid biosynthesis; glycine biosynthesis; glycine from L-serine: step 1/1. In terms of biological role, catalyzes the reversible interconversion of serine and glycine with tetrahydrofolate (THF) serving as the one-carbon carrier. This reaction serves as the major source of one-carbon groups required for the biosynthesis of purines, thymidylate, methionine, and other important biomolecules. Also exhibits THF-independent aldolase activity toward beta-hydroxyamino acids, producing glycine and aldehydes, via a retro-aldol mechanism. This Hahella chejuensis (strain KCTC 2396) protein is Serine hydroxymethyltransferase 1.